Here is a 1009-residue protein sequence, read N- to C-terminus: Translation initiation factor IF-2 (1009 aa).

Positions 1-415 (MSDENENGRP…EREKEKRRGG (415 aa)) are disordered. Residues 94-110 (EELRARQRVVDAAREAQ) show a composition bias toward basic and acidic residues. A compositionally biased stretch (low complexity) spans 111-121 (ARQVAEQAAAE). Over residues 122-136 (ARARAAQEAAQREAA) the composition is skewed to basic and acidic residues. Positions 137 to 146 (AKAAAERAAA) are enriched in low complexity. Pro residues predominate over residues 147–174 (APPPVAQAPAAPAPAAPVTPPPAAPQAP). Low complexity predominate over residues 175 to 189 (RPVAQAPVAPSAPRQ). 2 stretches are compositionally biased toward basic and acidic residues: residues 208-218 (EPSRDRRDDRP) and 251-287 (PRPE…RPQG). The segment covering 311–320 (GGPPRGPRPG) has biased composition (pro residues). Basic and acidic residues-rich tracts occupy residues 346–358 (MDRR…DRRK) and 403–415 (RARE…RRGG). Residues 505–675 (LRPPVVTIMG…LLQAEVLDLK (171 aa)) enclose the tr-type G domain. A G1 region spans residues 514–521 (GHVDHGKT). 514 to 521 (GHVDHGKT) is a binding site for GTP. The segment at 539–543 (GITQH) is G2. The interval 561–564 (DTPG) is G3. GTP contacts are provided by residues 561–565 (DTPGH) and 615–618 (NKMD). A G4 region spans residues 615–618 (NKMD). Positions 651 to 653 (SAK) are G5.

Belongs to the TRAFAC class translation factor GTPase superfamily. Classic translation factor GTPase family. IF-2 subfamily.

It localises to the cytoplasm. One of the essential components for the initiation of protein synthesis. Protects formylmethionyl-tRNA from spontaneous hydrolysis and promotes its binding to the 30S ribosomal subunits. Also involved in the hydrolysis of GTP during the formation of the 70S ribosomal complex. This Caulobacter vibrioides (strain ATCC 19089 / CIP 103742 / CB 15) (Caulobacter crescentus) protein is Translation initiation factor IF-2.